The following is a 248-amino-acid chain: Uridylate kinase (248 aa).

Lysine 13–glycine 16 lines the ATP pocket. Glycine 55 serves as a coordination point for UMP. ATP is bound by residues glycine 56 and arginine 60. UMP contacts are provided by residues aspartate 75 and threonine 136–threonine 143. 3 residues coordinate ATP: threonine 163, tyrosine 169, and aspartate 172.

This sequence belongs to the UMP kinase family. Homohexamer.

It localises to the cytoplasm. It carries out the reaction UMP + ATP = UDP + ADP. The protein operates within pyrimidine metabolism; CTP biosynthesis via de novo pathway; UDP from UMP (UMPK route): step 1/1. With respect to regulation, inhibited by UTP. Functionally, catalyzes the reversible phosphorylation of UMP to UDP. This chain is Uridylate kinase, found in Leptospira interrogans serogroup Icterohaemorrhagiae serovar copenhageni (strain Fiocruz L1-130).